The chain runs to 406 residues: Lissencephaly-1 homolog (406 aa).

The 33-residue stretch at 7 to 39 (QREELNKAIADYLRSNGYESALEAFQKEAEMPG) folds into the LisH domain. A coiled-coil region spans residues 54 to 81 (TSVIRLQKKVMDLEAKLAEAEKEFQSGG). Residues 74 to 89 (EKEFQSGGPNKKERSP) show a composition bias toward basic and acidic residues. The segment at 74 to 99 (EKEFQSGGPNKKERSPSEWIPRPPAR) is disordered. WD repeat units lie at residues 104–145 (GHRS…RTLK), 146–185 (GHTD…NIKT), 188–227 (GHDH…CVKT), 230–269 (GHRE…CKAE), 272–329 (EHEH…CIMT), 332–371 (GHDN…CQKT), and 374–406 (AHQH…WECR).

It belongs to the WD repeat LIS1/nudF family.

It is found in the cytoplasm. Its subcellular location is the cytoskeleton. It localises to the microtubule organizing center. The protein resides in the centrosome. Its function is as follows. Positively regulates the activity of the minus-end directed microtubule motor protein dynein. May enhance dynein-mediated microtubule sliding by targeting dynein to the microtubule plus end. Required for several dynein- and microtubule-dependent processes. The chain is Lissencephaly-1 homolog from Branchiostoma floridae (Florida lancelet).